The following is a 108-amino-acid chain: Peptidyl-prolyl cis-trans isomerase FKBP1A (108 aa).

Residue Ser10 is modified to Phosphoserine. A PPIase FKBP-type domain is found at 20–108 (GQTCVVHYTG…VFDVELLKLE (89 aa)). Residue Lys53 is modified to N6-acetyllysine; alternate. The residue at position 53 (Lys53) is an N6-succinyllysine; alternate.

It belongs to the FKBP-type PPIase family. FKBP1 subfamily. As to quaternary structure, interacts with TGFBR1; prevents TGFBR1 phosphorylation by TGFBR2 and stabilizes it in the inactive conformation. Interacts with ACVR1B and SMAD7. Identified in a complex composed of RYR1, PDE4D, PKA, FKBP1A and protein phosphatase 1 (PP1). Interacts directly with RYR2. Interacts directly with RYR3. Interacts directly with RYR1. Interacts with GLMN; rapamycin and FK506 abolish the interaction with GLMN in a dose dependent manner. In terms of tissue distribution, ubiquitous.

It is found in the cytoplasm. It localises to the cytosol. The protein localises to the sarcoplasmic reticulum membrane. It catalyses the reaction [protein]-peptidylproline (omega=180) = [protein]-peptidylproline (omega=0). Inhibited by both FK506 and rapamycin. Its function is as follows. Keeps in an inactive conformation TGFBR1, the TGF-beta type I serine/threonine kinase receptor, preventing TGF-beta receptor activation in absence of ligand. Recruits SMAD7 to ACVR1B which prevents the association of SMAD2 and SMAD3 with the activin receptor complex, thereby blocking the activin signal. May modulate the RYR1 calcium channel activity. PPIases accelerate the folding of proteins. It catalyzes the cis-trans isomerization of proline imidic peptide bonds in oligopeptides. This is Peptidyl-prolyl cis-trans isomerase FKBP1A (Fkbp1a) from Rattus norvegicus (Rat).